The primary structure comprises 82 residues: Small ribosomal subunit protein bS16 (82 aa).

This sequence belongs to the bacterial ribosomal protein bS16 family.

This chain is Small ribosomal subunit protein bS16, found in Vibrio cholerae serotype O1 (strain ATCC 39541 / Classical Ogawa 395 / O395).